Reading from the N-terminus, the 302-residue chain is MTEQFDKTYCGFIAIVGRPNVGKSTLLNKILGQKISITSRKAQTTRHRIVGIKTEGAYQEIYVDTPGLHIEEKRAINRLMNRAASSAIGDVDLIIFVVDGTHWNADDEMVLNKLRNAKAPVVLAINKVDNIKNKDDLLPFITDLSSKFNFAHIVPISAQRGNNVHELEKIVRQSLREGVHHFPEDYVTDRSQRFMASEIIREKLMRFTGEELPYSVTVEIEQFKVNERGTYEINGLILVEREGQKKMVIGAGGQKIKTIGMEARADMERLFDNKVHLELWVKVKSGWADDERALRSLGYMDE.

Positions 9-177 constitute an Era-type G domain; the sequence is YCGFIAIVGR…EKIVRQSLRE (169 aa). The interval 17–24 is G1; it reads GRPNVGKS. Residue 17–24 coordinates GTP; the sequence is GRPNVGKS. Positions 43 to 47 are G2; sequence QTTRH. Residues 64 to 67 form a G3 region; sequence DTPG. GTP contacts are provided by residues 64–68 and 126–129; these read DTPGL and NKVD. The segment at 126–129 is G4; it reads NKVD. The G5 stretch occupies residues 156–158; that stretch reads ISA. The KH type-2 domain maps to 208 to 285; the sequence is TGEELPYSVT…HLELWVKVKS (78 aa).

It belongs to the TRAFAC class TrmE-Era-EngA-EngB-Septin-like GTPase superfamily. Era GTPase family. Monomer.

It is found in the cytoplasm. Its subcellular location is the cell inner membrane. Its function is as follows. An essential GTPase that binds both GDP and GTP, with rapid nucleotide exchange. Plays a role in 16S rRNA processing and 30S ribosomal subunit biogenesis and possibly also in cell cycle regulation and energy metabolism. The protein is GTPase Era of Haemophilus influenzae (strain PittGG).